The following is a 246-amino-acid chain: Major prion protein (246 aa).

A signal peptide spans 1-15 (MLVVFVATWSDLGLC). The interaction with GRB2, ERI3 and SYN1 stretch occupies residues 16 to 223 (KKRPKPGGWN…ESQAYYQRGS (208 aa)). The interval 18-100 (RPKPGGWNTG…QWHKPSKPKT (83 aa)) is disordered. A run of 5 repeats spans residues 44–52 (PQGGGGWGQ), 53–60 (PHGGGWGQ), 61–68 (PHGGGWGQ), 69–76 (PHGGGWGQ), and 77–84 (PHGGGWGQ). A 5 X 8 AA tandem repeats of P-H-G-G-G-W-G-Q region spans residues 44–84 (PQGGGGWGQPHGGGWGQPHGGGWGQPHGGGWGQPHGGGWGQ). Positions 45 to 88 (QGGGGWGQPHGGGWGQPHGGGWGQPHGGGWGQPHGGGWGQGGGT) are enriched in gly residues. The Cu(2+) site is built by His54, Gly55, Gly56, His62, Gly63, Gly64, His70, Gly71, Gly72, His78, Gly79, and Gly80. A compositionally biased stretch (basic residues) spans 91 to 100 (QWHKPSKPKT). A disulfide bridge links Cys172 with Cys207. Asn174 and Asn190 each carry an N-linked (GlcNAc...) asparagine glycan. Residue Ser223 is the site of GPI-anchor amidated serine attachment. Positions 224 to 246 (SMVLFSSPPVILLISFLIFLIVG) are cleaved as a propeptide — removed in mature form.

It belongs to the prion family. As to quaternary structure, monomer and homodimer. Has a tendency to aggregate into amyloid fibrils containing a cross-beta spine, formed by a steric zipper of superposed beta-strands. Soluble oligomers may represent an intermediate stage on the path to fibril formation. Copper binding may promote oligomerization. Interacts with GRB2, APP, ERI3/PRNPIP and SYN1. Mislocalized cytosolically exposed PrP interacts with MGRN1; this interaction alters MGRN1 subcellular location and causes lysosomal enlargement. Interacts with KIAA1191.

The protein localises to the cell membrane. It localises to the golgi apparatus. Functionally, its primary physiological function is unclear. Has cytoprotective activity against internal or environmental stresses. May play a role in neuronal development and synaptic plasticity. May be required for neuronal myelin sheath maintenance. May play a role in iron uptake and iron homeostasis. Soluble oligomers are toxic to cultured neuroblastoma cells and induce apoptosis (in vitro). Association with GPC1 (via its heparan sulfate chains) targets PRNP to lipid rafts. Also provides Cu(2+) or Zn(2+) for the ascorbate-mediated GPC1 deaminase degradation of its heparan sulfate side chains. The chain is Major prion protein (PRNP) from Erythrocebus patas (Red guenon).